The sequence spans 444 residues: Na(+)/H(+) antiporter NhaA (444 aa).

11 helical membrane-spanning segments follow: residues 27 to 47 (TTGL…NSPL), 72 to 92 (IHHW…GLEI), 108 to 128 (MLPI…YYAI), 136 to 156 (AGWG…LVLL), 167 to 187 (FLVA…ALFY), 190 to 210 (EINM…VSFN), 212 to 232 (FGIH…LFML), 312 to 332 (HLPV…GVSI), 349 to 369 (VMAG…YLAI), 385 to 405 (VFGV…IAEL), and 419 to 439 (IGIL…LRFI).

This sequence belongs to the NhaA Na(+)/H(+) (TC 2.A.33) antiporter family.

Its subcellular location is the cell inner membrane. The enzyme catalyses Na(+)(in) + 2 H(+)(out) = Na(+)(out) + 2 H(+)(in). Na(+)/H(+) antiporter that extrudes sodium in exchange for external protons. The polypeptide is Na(+)/H(+) antiporter NhaA (Sulfurimonas denitrificans (strain ATCC 33889 / DSM 1251) (Thiomicrospira denitrificans (strain ATCC 33889 / DSM 1251))).